A 351-amino-acid chain; its full sequence is Centromere-binding protein 1 (351 aa).

Methionine 1 bears the N-acetylmethionine mark. Polar residues-rich tracts occupy residues 1–10 (MNSLANNNKL), 43–52 (LLSQESNDGN), and 65–77 (KGTQ…GLTS). Disordered stretches follow at residues 1–164 (MNSL…TQQS), 196–233 (KKDI…VERR), and 327–351 (YEDM…PHEA). At serine 45 the chain carries Phosphoserine; by ATM or ATR. Position 48 is a phosphoserine (serine 48). Serine 84 is modified (phosphoserine). 2 stretches are compositionally biased toward polar residues: residues 100 to 124 (VNYT…TNAN) and 138 to 164 (TPSN…TQQS). Threonine 138 is subject to Phosphothreonine. Residues 222-270 (QRKDSHKEVERRRRENINTAINVLSDLLPVRESSKAAILACAAEYIQKL) enclose the bHLH domain.

In terms of assembly, binds DNA as a dimer. Associates with MET4 to form a heteromeric complex which also includes MET28.

The protein localises to the nucleus. It localises to the mitochondrion. Its subcellular location is the chromosome. The protein resides in the centromere. In terms of biological role, required for chromosome stability and methionine prototrophy. It is involved in chromosomal segregation. Binds to a highly conserved DNA sequence (5'-RTCACRTG-3'), called CDEI, found in centromeres and in several promoters. DNA-binding activity is enhanced by MET28. Required as an auxiliary factor for transcriptional activation of sulfur metabolism together with MET4 and MET28. The protein is Centromere-binding protein 1 (CBF1) of Saccharomyces cerevisiae (strain ATCC 204508 / S288c) (Baker's yeast).